A 330-amino-acid chain; its full sequence is HPr kinase/phosphorylase (330 aa).

Active-site residues include His153 and Lys174. 168-175 (GKSGLGKS) contacts ATP. Ser175 contacts Mg(2+). Asp192 serves as the catalytic Proton acceptor; for phosphorylation activity. Proton donor; for dephosphorylation activity. An important for the catalytic mechanism of both phosphorylation and dephosphorylation region spans residues 217–226 (MEIRGLGVVD). A Mg(2+)-binding site is contributed by Glu218. Arg259 is a catalytic residue. The segment at 280 to 285 (PIFPGK) is important for the catalytic mechanism of dephosphorylation.

This sequence belongs to the HPrK/P family. In terms of assembly, homohexamer. Requires Mg(2+) as cofactor.

It carries out the reaction [HPr protein]-L-serine + ATP = [HPr protein]-O-phospho-L-serine + ADP + H(+). The enzyme catalyses [HPr protein]-O-phospho-L-serine + phosphate + H(+) = [HPr protein]-L-serine + diphosphate. Its function is as follows. Catalyzes the ATP- as well as the pyrophosphate-dependent phosphorylation of a specific serine residue in HPr, a phosphocarrier protein of the phosphoenolpyruvate-dependent sugar phosphotransferase system (PTS). HprK/P also catalyzes the pyrophosphate-producing, inorganic phosphate-dependent dephosphorylation (phosphorolysis) of seryl-phosphorylated HPr (P-Ser-HPr). The chain is HPr kinase/phosphorylase from Chlorobium limicola (strain DSM 245 / NBRC 103803 / 6330).